The sequence spans 415 residues: Gamma-glutamyl phosphate reductase (415 aa).

This sequence belongs to the gamma-glutamyl phosphate reductase family.

It is found in the cytoplasm. It catalyses the reaction L-glutamate 5-semialdehyde + phosphate + NADP(+) = L-glutamyl 5-phosphate + NADPH + H(+). It participates in amino-acid biosynthesis; L-proline biosynthesis; L-glutamate 5-semialdehyde from L-glutamate: step 2/2. Its function is as follows. Catalyzes the NADPH-dependent reduction of L-glutamate 5-phosphate into L-glutamate 5-semialdehyde and phosphate. The product spontaneously undergoes cyclization to form 1-pyrroline-5-carboxylate. This chain is Gamma-glutamyl phosphate reductase, found in Thermotoga maritima (strain ATCC 43589 / DSM 3109 / JCM 10099 / NBRC 100826 / MSB8).